A 281-amino-acid chain; its full sequence is Lectin (281 aa).

The first 26 residues, 1–26 (MATYKLCSVLALSLTLFLLILNKVNS), serve as a signal peptide directing secretion. Asn43 and Asn139 each carry an N-linked (GlcNAc...) asparagine glycan. Positions 269 to 281 (AVIPTSNHNTFAI) are excised as a propeptide.

It belongs to the leguminous lectin family. Homodimer. A minor C-terminal proteolytic processing site is observed at position 268.

Its function is as follows. Galactose and N-acetyllactosamine specific lectin. Binds to the H-2 blood type determinant fucosyl-N-acetyllactosamine. The polypeptide is Lectin (Erythrina corallodendron (Coral tree)).